A 404-amino-acid polypeptide reads, in one-letter code: MNPHHSHHHSSYGGGGYPGQAYRQQQPPSNPYQYNQPSPQPYQGSQPPQNGYNGGYPAASQGPMYGGRPGIADVYHNSYNQGNHSAPAPPPSDPVSFGQGAPQGYNFQYSRCTGKRKALLIGINYFNQKGQLRGCINDVKNMSTYLNQNFGYAREDMVVLTDDQQNPMSQPTKANILRAMHWLVKDAQPNDSLFFHYSGHGGQTPDLDGDEDDGYDEVIYPVDFRAAGHIVDDEMHRIMVKPLQPGVRLTAIFDSCHSGSALDLPYIYSTQGILKEPNLAKEAGQGLLGVVSAYARGDMSSMMSTAVGFFKKATKGDEAYERTIQTKTSPADVVMWSGSKDDQTSQDAQIAGQATGAMSWAFISALRKNPQQSYVQLLNSIRDELSAKYTQKPQLSCSHPLVAL.

Residues 1-10 (MNPHHSHHHS) are compositionally biased toward basic residues. Residues 1–100 (MNPHHSHHHS…PSDPVSFGQG (100 aa)) are disordered. A compositionally biased stretch (low complexity) spans 24-51 (QQQPPSNPYQYNQPSPQPYQGSQPPQNG). Residues His200 and Cys256 contribute to the active site.

This sequence belongs to the peptidase C14B family.

In terms of biological role, involved in cell death (apoptosis). The sequence is that of Metacaspase-1A (casA) from Aspergillus niger (strain ATCC MYA-4892 / CBS 513.88 / FGSC A1513).